The sequence spans 370 residues: Aspartate beta-hydroxylase domain-containing protein 2 (370 aa).

The Cytoplasmic segment spans residues 1–57 (MVWALPRTSSPSCIAPSYKPDSGWIKMSAEWLIDWSCLLNGLRDLIAGCIQAVRDCN). The chain crosses the membrane as a helical span at residues 58 to 78 (SFALTTVICLLMLFAWYCYRV). At 79–370 (GKDQPRSPFA…ALDSIFAPGR (292 aa)) the chain is on the lumenal side. N-linked (GlcNAc...) asparagine glycosylation occurs at N212. Residues W229 and S273 each contribute to the 2-oxoglutarate site. H284 provides a ligand contact to Fe cation. Residue 293 to 295 (RCH) participates in 2-oxoglutarate binding. Position 329 (H329) interacts with Fe cation. R342 is a 2-oxoglutarate binding site.

It belongs to the aspartyl/asparaginyl beta-hydroxylase family. Requires Fe cation as cofactor.

Its subcellular location is the membrane. In terms of biological role, may function as 2-oxoglutarate-dependent dioxygenase. This chain is Aspartate beta-hydroxylase domain-containing protein 2 (asphd2), found in Xenopus tropicalis (Western clawed frog).